Here is a 481-residue protein sequence, read N- to C-terminus: uncharacterized protein (481 aa).

Transmembrane regions (helical) follow at residues 14-34 (LGFCSVVMLGINSIIGAGIFL), 46-66 (FAPMAYVLAGIFAGVVAIVFA), 90-110 (IGIYVGVTHAITASIAWGVLA), 134-154 (FSVKTLTFLGFIGVLLAINLF), 167-187 (TVGKAFALSAFIVGGLWIITT), 218-238 (FSSMALATIVALYAFTGFESI), 258-278 (IAIFSVGAIYLLTLTVAMLLG), 303-323 (IIVVGALISMFGINVAASFGA), 377-397 (LAVIARFVQFIIVPIALIALA), 411-431 (AFTDKVLPLVAIVVSVGLAVS), and 446-466 (YFSIALIVITFIVVPAMAYLH).

The protein belongs to the amino acid-polyamine-organocation (APC) superfamily.

It is found in the cell membrane. Functionally, probable amino-acid or metabolite transport protein. This is an uncharacterized protein from Mycobacterium tuberculosis (strain CDC 1551 / Oshkosh).